Reading from the N-terminus, the 319-residue chain is Inositol phosphoceramide mannosyltransferase 1 (319 aa).

The chain crosses the membrane as a helical span at residues 8–28 (LLLKGIPICGVILLILWGYSL). N-linked (GlcNAc...) asparagine glycans are attached at residues Asn-115 and Asn-198. The next 2 membrane-spanning stretches (helical) occupy residues 211–231 (PTVF…KYLL) and 279–299 (VLFF…RVVF).

The protein belongs to the glycosyltransferase 32 family.

The protein localises to the golgi apparatus. The protein resides in the cis-Golgi network membrane. Its subcellular location is the trans-Golgi network membrane. In terms of biological role, with imt2 and imt3, is required for the synthesis of mannosyl phosphorylinositol ceramide (MIPC). Catalyzes the addition of mannosyl to phosphorylinositol ceramide (IPC). MIPC is essential for cell morphology, cell-surface distribution of ergosterol, localization for plasma-membrane transporters, and lipid-raft-mediated endocytosis of plasma membrane proteins to the vacuole. The protein is Inositol phosphoceramide mannosyltransferase 1 (imt1) of Schizosaccharomyces pombe (strain 972 / ATCC 24843) (Fission yeast).